The following is a 199-amino-acid chain: MGYLVPTVIEQSSRGERAYDIYSRLLKDRIIMLTGPVEDGMANSIIAQLLFLDAQDNTKDIYLYVNTPGGSVSAGLAIVDTMNFIKSDVQTIVMGMAASMGTIIASSGTKGKRFMLPNAEYLIHQPMGGTGQGTQQTDMAIVAEQLLKTRKRLEQILADNSNRSLEQIHKDAERDHWMDAKETLEYGFIDEIMENNSLK.

S99 acts as the Nucleophile in catalysis. Residue H124 is part of the active site.

The protein belongs to the peptidase S14 family. As to quaternary structure, fourteen ClpP subunits assemble into 2 heptameric rings which stack back to back to give a disk-like structure with a central cavity, resembling the structure of eukaryotic proteasomes.

Its subcellular location is the cytoplasm. It catalyses the reaction Hydrolysis of proteins to small peptides in the presence of ATP and magnesium. alpha-casein is the usual test substrate. In the absence of ATP, only oligopeptides shorter than five residues are hydrolyzed (such as succinyl-Leu-Tyr-|-NHMec, and Leu-Tyr-Leu-|-Tyr-Trp, in which cleavage of the -Tyr-|-Leu- and -Tyr-|-Trp bonds also occurs).. Functionally, cleaves peptides in various proteins in a process that requires ATP hydrolysis. Has a chymotrypsin-like activity. Plays a major role in the degradation of misfolded proteins. The polypeptide is ATP-dependent Clp protease proteolytic subunit (Lactococcus lactis subsp. lactis (strain IL1403) (Streptococcus lactis)).